Reading from the N-terminus, the 305-residue chain is UDP-N-acetylenolpyruvoylglucosamine reductase 2 (305 aa).

In terms of domain architecture, FAD-binding PCMH-type spans 33-197 (VGGKADVFVA…LEARFELEEG (165 aa)). The active site involves Arg-176. Ser-226 (proton donor) is an active-site residue. Glu-296 is an active-site residue.

The protein belongs to the MurB family. FAD is required as a cofactor.

Its subcellular location is the cytoplasm. The enzyme catalyses UDP-N-acetyl-alpha-D-muramate + NADP(+) = UDP-N-acetyl-3-O-(1-carboxyvinyl)-alpha-D-glucosamine + NADPH + H(+). The protein operates within cell wall biogenesis; peptidoglycan biosynthesis. Its function is as follows. Cell wall formation. This chain is UDP-N-acetylenolpyruvoylglucosamine reductase 2 (murB2), found in Bacillus cereus (strain ATCC 14579 / DSM 31 / CCUG 7414 / JCM 2152 / NBRC 15305 / NCIMB 9373 / NCTC 2599 / NRRL B-3711).